Consider the following 429-residue polypeptide: Glucose-1-phosphate adenylyltransferase (429 aa).

Alpha-D-glucose 1-phosphate contacts are provided by residues Tyr116, Gly181, 196 to 197 (EK), and Ser214.

This sequence belongs to the bacterial/plant glucose-1-phosphate adenylyltransferase family. As to quaternary structure, homotetramer.

The catalysed reaction is alpha-D-glucose 1-phosphate + ATP + H(+) = ADP-alpha-D-glucose + diphosphate. It participates in glycan biosynthesis; glycogen biosynthesis. Involved in the biosynthesis of ADP-glucose, a building block required for the elongation reactions to produce glycogen. Catalyzes the reaction between ATP and alpha-D-glucose 1-phosphate (G1P) to produce pyrophosphate and ADP-Glc. The chain is Glucose-1-phosphate adenylyltransferase from Paramagnetospirillum magneticum (strain ATCC 700264 / AMB-1) (Magnetospirillum magneticum).